The chain runs to 92 residues: UPF0223 protein SSP1692 (92 aa).

It belongs to the UPF0223 family.

The protein is UPF0223 protein SSP1692 of Staphylococcus saprophyticus subsp. saprophyticus (strain ATCC 15305 / DSM 20229 / NCIMB 8711 / NCTC 7292 / S-41).